Reading from the N-terminus, the 428-residue chain is MFVDQTKIDVQAGKGGDGAVAFRHEKYVPLGGPAGGDGGRGGSIILVADSGLRTLMDFRFRRKFKADNGENGRIKSQYGRGAKDVRLKVPMGTSVYDFNTGELLGDLVKNGQELVVARGGKGGIGNIHFATPTRTAPEIAENGEPGEFRTLRLELKVLADVGLVGFPSVGKSTLLSVVTKAKPKIAAYEFTTLTPNLGMVVLPDGRDFSMADLPGLIEGASKGVGLGIQFLRHVERTKVILHLVSMDPNNGRDAYEDYETIRKELAGYTKDLTSKKELIVATQMDIPGSEEKLAEFKKKLGDKTVYPISSVTHQGVSELMGKTADLVEEVAKEEAEKPAEIKVAEKEYVYKKPEDDGFKVERTGEHSFIVTGNKLERLVQRTNLDHTDGIMLLARKLKRMGVDDALREKGAVNGDDVSIADFTFEFVD.

The region spanning 1-158 (MFVDQTKIDV…RTLRLELKVL (158 aa)) is the Obg domain. The 170-residue stretch at 159–328 (ADVGLVGFPS…LMGKTADLVE (170 aa)) folds into the OBG-type G domain. GTP contacts are provided by residues 165–172 (GFPSVGKS), 190–194 (FTTLT), 212–215 (DLPG), 282–285 (TQMD), and 309–311 (SSV). Mg(2+)-binding residues include Ser172 and Thr192. The region spanning 350–428 (YKKPEDDGFK…IADFTFEFVD (79 aa)) is the OCT domain.

It belongs to the TRAFAC class OBG-HflX-like GTPase superfamily. OBG GTPase family. In terms of assembly, monomer. Mg(2+) serves as cofactor.

It is found in the cytoplasm. Functionally, an essential GTPase which binds GTP, GDP and possibly (p)ppGpp with moderate affinity, with high nucleotide exchange rates and a fairly low GTP hydrolysis rate. Plays a role in control of the cell cycle, stress response, ribosome biogenesis and in those bacteria that undergo differentiation, in morphogenesis control. The chain is GTPase Obg from Lactobacillus gasseri (strain ATCC 33323 / DSM 20243 / BCRC 14619 / CIP 102991 / JCM 1131 / KCTC 3163 / NCIMB 11718 / NCTC 13722 / AM63).